The chain runs to 334 residues: D-alanine--D-alanine ligase (334 aa).

An ATP-grasp domain is found at 110-306 (KHVLKSLGID…FDHVVDLIVQ (197 aa)). 138-190 (LPYPFVIKPVRGGSTIGVHAIFSKSEYLDLSAHADTLEDRMIVEEYVSGQEVQ) serves as a coordination point for ATP. Residues Asp258, Glu272, and Asn274 each coordinate Mg(2+).

This sequence belongs to the D-alanine--D-alanine ligase family. The cofactor is Mg(2+). Mn(2+) serves as cofactor.

Its subcellular location is the cytoplasm. The enzyme catalyses 2 D-alanine + ATP = D-alanyl-D-alanine + ADP + phosphate + H(+). Its pathway is cell wall biogenesis; peptidoglycan biosynthesis. In terms of biological role, cell wall formation. This Anaplasma marginale (strain Florida) protein is D-alanine--D-alanine ligase.